A 230-amino-acid polypeptide reads, in one-letter code: Cytidylate kinase (230 aa).

G12–T20 contacts ATP.

Belongs to the cytidylate kinase family. Type 1 subfamily.

Its subcellular location is the cytoplasm. It catalyses the reaction CMP + ATP = CDP + ADP. The catalysed reaction is dCMP + ATP = dCDP + ADP. This Yersinia enterocolitica serotype O:8 / biotype 1B (strain NCTC 13174 / 8081) protein is Cytidylate kinase.